The following is a 175-amino-acid chain: 2-oxo-4-hydroxy-4-carboxy-5-ureidoimidazoline decarboxylase (175 aa).

Residue His-67 is the Proton donor of the active site. Residues Pro-68, 84-88 (SQNEQ), and 119-123 (FVICA) contribute to the substrate site. A Microbody targeting signal motif is present at residues 173 to 175 (TKL).

The protein belongs to the OHCU decarboxylase family.

It localises to the peroxisome. It carries out the reaction 5-hydroxy-2-oxo-4-ureido-2,5-dihydro-1H-imidazole-5-carboxylate + H(+) = (S)-allantoin + CO2. It participates in purine metabolism; urate degradation; (S)-allantoin from urate: step 3/3. In terms of biological role, catalyzes the stereoselective decarboxylation of 2-oxo-4-hydroxy-4-carboxy-5-ureidoimidazoline (OHCU) to (S)-allantoin. This is 2-oxo-4-hydroxy-4-carboxy-5-ureidoimidazoline decarboxylase (urad) from Xenopus laevis (African clawed frog).